Here is a 1504-residue protein sequence, read N- to C-terminus: DNA-directed RNA polymerase subunit beta' (1504 aa).

Zn(2+) contacts are provided by cysteine 60, cysteine 62, cysteine 75, and cysteine 78. Residues 265–294 (RKQRDLEDAEQLTGAERERKEYEASQERER) are disordered. Positions 279-294 (AERERKEYEASQERER) are enriched in basic and acidic residues. The Mg(2+) site is built by aspartate 626, aspartate 628, and aspartate 630. Zn(2+) is bound by residues cysteine 1002, cysteine 1075, cysteine 1082, and cysteine 1085. The interval 1468-1504 (RALIGGDGDDGERNNGDFDDQVGEDVVIPPDDDDQEA) is disordered.

The protein belongs to the RNA polymerase beta' chain family. In terms of assembly, the RNAP catalytic core consists of 2 alpha, 1 beta, 1 beta' and 1 omega subunit. When a sigma factor is associated with the core the holoenzyme is formed, which can initiate transcription. Mg(2+) serves as cofactor. Zn(2+) is required as a cofactor.

The catalysed reaction is RNA(n) + a ribonucleoside 5'-triphosphate = RNA(n+1) + diphosphate. DNA-dependent RNA polymerase catalyzes the transcription of DNA into RNA using the four ribonucleoside triphosphates as substrates. The chain is DNA-directed RNA polymerase subunit beta' from Roseiflexus sp. (strain RS-1).